A 268-amino-acid chain; its full sequence is Resolvase (268 aa).

Positions 47–250 (ELPKYLLAPE…FALDVAARHR (204 aa)) constitute a Tyr recombinase domain. Catalysis depends on residues R82, K114, H202, R205, and H228. The active-site O-(3'-phospho-DNA)-tyrosine intermediate is Y237.

The protein belongs to the 'phage' integrase family.

In terms of biological role, acts as a repressor of transcription and as a site-specific resolvase that cleaves at the RfsF site. This Escherichia coli (strain K12) protein is Resolvase (resD).